The following is a 318-amino-acid chain: Ribose-phosphate pyrophosphokinase 2 (318 aa).

4 residues coordinate Mg(2+): aspartate 132, histidine 134, histidine 143, and aspartate 147.

It belongs to the ribose-phosphate pyrophosphokinase family.

The protein localises to the cytoplasm. It catalyses the reaction D-ribose 5-phosphate + ATP = 5-phospho-alpha-D-ribose 1-diphosphate + AMP + H(+). The protein operates within metabolic intermediate biosynthesis; 5-phospho-alpha-D-ribose 1-diphosphate biosynthesis; 5-phospho-alpha-D-ribose 1-diphosphate from D-ribose 5-phosphate (route I): step 1/1. Its function is as follows. 5-phosphoribose 1-diphosphate synthase involved in nucleotide, histidine, and tryptophan biosynthesis. Active in heteromultimeric complexes with other 5-phosphoribose 1-diphosphate synthases (PRS2, PRS3, PRS4 and PRS5). This Saccharomyces cerevisiae (strain ATCC 204508 / S288c) (Baker's yeast) protein is Ribose-phosphate pyrophosphokinase 2 (PRS2).